Reading from the N-terminus, the 270-residue chain is MSKIFFRLNLVRNSLWRRAASFTSYSELKSLTPYEILELPRTCTANDIKRKYIELVKKHHPDKMKNASQLAPTESPPEINKHNEEYFRLLLAANALLSDKRRREEYDRFGIHWNQPSHPTHPSPQNWSQARYPTYSRSRRSAGMGSWEEYYYNSYDYMNDQNASNKNRKFDDEGMLVFAGILSILVIINIYSNYRNGKFYREARSAAIGRAEDNFDYYSTGMADLSKDDRISRFLILREQSKQIPTQQKPSSLPPPERALPAPTMPTPSS.

The 70-residue stretch at 43–112 (CTANDIKRKY…REEYDRFGIH (70 aa)) folds into the J domain. The disordered stretch occupies residues 239 to 270 (EQSKQIPTQQKPSSLPPPERALPAPTMPTPSS). A compositionally biased stretch (polar residues) spans 242–251 (KQIPTQQKPS). A compositionally biased stretch (pro residues) spans 252–270 (SLPPPERALPAPTMPTPSS).

This is an uncharacterized protein from Schizosaccharomyces pombe (strain 972 / ATCC 24843) (Fission yeast).